A 116-amino-acid polypeptide reads, in one-letter code: Probable prefoldin subunit 2 (116 aa).

The protein belongs to the prefoldin subunit beta family. Heterohexamer of two PFD-alpha type and four PFD-beta type subunits.

Functionally, binds specifically to cytosolic chaperonin (c-CPN) and transfers target proteins to it. Binds to nascent polypeptide chain and promotes folding in an environment in which there are many competing pathways for nonnative proteins. The chain is Probable prefoldin subunit 2 (pfdn2) from Dictyostelium discoideum (Social amoeba).